The sequence spans 328 residues: UPF0421 protein SE_1574 (328 aa).

The next 4 membrane-spanning stretches (helical) occupy residues 26–46, 61–81, 109–129, and 132–152; these read LFCM…IVTI, LPAT…FGDQ, AVLT…FNFF, and LLTA…ILPP.

Belongs to the UPF0421 family.

Its subcellular location is the cell membrane. This chain is UPF0421 protein SE_1574, found in Staphylococcus epidermidis (strain ATCC 12228 / FDA PCI 1200).